A 259-amino-acid polypeptide reads, in one-letter code: GTP cyclohydrolase FolE2 (259 aa).

It belongs to the GTP cyclohydrolase IV family.

It catalyses the reaction GTP + H2O = 7,8-dihydroneopterin 3'-triphosphate + formate + H(+). It functions in the pathway cofactor biosynthesis; 7,8-dihydroneopterin triphosphate biosynthesis; 7,8-dihydroneopterin triphosphate from GTP: step 1/1. Functionally, converts GTP to 7,8-dihydroneopterin triphosphate. This is GTP cyclohydrolase FolE2 from Thermotoga petrophila (strain ATCC BAA-488 / DSM 13995 / JCM 10881 / RKU-1).